The sequence spans 465 residues: Soluble pyridine nucleotide transhydrogenase (465 aa).

FAD is bound at residue 35–44; sequence ERYNNVGGGC.

This sequence belongs to the class-I pyridine nucleotide-disulfide oxidoreductase family. FAD serves as cofactor.

The protein localises to the cytoplasm. The enzyme catalyses NAD(+) + NADPH = NADH + NADP(+). Conversion of NADPH, generated by peripheral catabolic pathways, to NADH, which can enter the respiratory chain for energy generation. The protein is Soluble pyridine nucleotide transhydrogenase of Photorhabdus laumondii subsp. laumondii (strain DSM 15139 / CIP 105565 / TT01) (Photorhabdus luminescens subsp. laumondii).